Reading from the N-terminus, the 240-residue chain is Purine nucleoside phosphorylase DeoD-type (240 aa).

A purine D-ribonucleoside is bound at residue H5. Phosphate is bound by residues G21, R25, R44, and 88 to 91 (RVGS). Residues 180–182 (EME) and 204–205 (SD) contribute to the a purine D-ribonucleoside site. The Proton donor role is filled by D205.

The protein belongs to the PNP/UDP phosphorylase family. As to quaternary structure, homohexamer; trimer of homodimers.

It carries out the reaction a purine D-ribonucleoside + phosphate = a purine nucleobase + alpha-D-ribose 1-phosphate. It catalyses the reaction a purine 2'-deoxy-D-ribonucleoside + phosphate = a purine nucleobase + 2-deoxy-alpha-D-ribose 1-phosphate. Functionally, catalyzes the reversible phosphorolytic breakdown of the N-glycosidic bond in the beta-(deoxy)ribonucleoside molecules, with the formation of the corresponding free purine bases and pentose-1-phosphate. The protein is Purine nucleoside phosphorylase DeoD-type of Actinobacillus pleuropneumoniae serotype 5b (strain L20).